A 150-amino-acid chain; its full sequence is D-aminoacyl-tRNA deacylase (150 aa).

The Gly-cisPro motif, important for rejection of L-amino acids motif lies at 138–139 (GP).

This sequence belongs to the DTD family. As to quaternary structure, homodimer.

The protein localises to the cytoplasm. It catalyses the reaction glycyl-tRNA(Ala) + H2O = tRNA(Ala) + glycine + H(+). The enzyme catalyses a D-aminoacyl-tRNA + H2O = a tRNA + a D-alpha-amino acid + H(+). Its function is as follows. An aminoacyl-tRNA editing enzyme that deacylates mischarged D-aminoacyl-tRNAs. Also deacylates mischarged glycyl-tRNA(Ala), protecting cells against glycine mischarging by AlaRS. Acts via tRNA-based rather than protein-based catalysis; rejects L-amino acids rather than detecting D-amino acids in the active site. By recycling D-aminoacyl-tRNA to D-amino acids and free tRNA molecules, this enzyme counteracts the toxicity associated with the formation of D-aminoacyl-tRNA entities in vivo and helps enforce protein L-homochirality. The polypeptide is D-aminoacyl-tRNA deacylase (Phocaeicola vulgatus (strain ATCC 8482 / DSM 1447 / JCM 5826 / CCUG 4940 / NBRC 14291 / NCTC 11154) (Bacteroides vulgatus)).